Here is a 659-residue protein sequence, read N- to C-terminus: uncharacterized protein (659 aa).

An N-terminal signal peptide occupies residues 1–25; sequence MVKRRLSAFGNAFLIYFIIFRLCCC. Over 26–556 the chain is Lumenal; the sequence is SPQTSHWCKY…LYQESSFQKR (531 aa). N-linked (GlcNAc...) asparagine glycans are attached at residues asparagine 94, asparagine 111, asparagine 128, and asparagine 142. An SUN domain is found at 173-335; sequence AATIDSNIDE…SLLRVYGKTM (163 aa). Residues asparagine 393 and asparagine 415 are each glycosylated (N-linked (GlcNAc...) asparagine). The interval 417-445 is disordered; it reads TGKSESYPATSTRSFNDISPSSSSSYSTA. A compositionally biased stretch (polar residues) spans 423 to 434; the sequence is YPATSTRSFNDI. Asparagine 495 and asparagine 504 each carry an N-linked (GlcNAc...) asparagine glycan. Residues 557–574 traverse the membrane as a helical segment; that stretch reads LLMLQLTVLIVLTVYMAV. The Cytoplasmic portion of the chain corresponds to 575–659; that stretch reads SRLPENLPTT…IIHSRSHSVC (85 aa). Disordered regions lie at residues 580–603 and 632–659; these read NLPT…SRDE and KRDP…HSVC. Positions 581 to 592 are enriched in polar residues; that stretch reads LPTTRSSSNNPI. The span at 641–651 shows a compositional bias: basic and acidic residues; the sequence is SIHEREQDKII.

Belongs to the SLP1 family. As to quaternary structure, interacts with EMP65.

The protein localises to the endoplasmic reticulum membrane. May be involved in membrane protein folding. This is an uncharacterized protein from Schizosaccharomyces pombe (strain 972 / ATCC 24843) (Fission yeast).